The primary structure comprises 125 residues: Ribonuclease P protein component (125 aa).

Belongs to the RnpA family. Consists of a catalytic RNA component (M1 or rnpB) and a protein subunit.

The catalysed reaction is Endonucleolytic cleavage of RNA, removing 5'-extranucleotides from tRNA precursor.. Its function is as follows. RNaseP catalyzes the removal of the 5'-leader sequence from pre-tRNA to produce the mature 5'-terminus. It can also cleave other RNA substrates such as 4.5S RNA. The protein component plays an auxiliary but essential role in vivo by binding to the 5'-leader sequence and broadening the substrate specificity of the ribozyme. In Rhodococcus jostii (strain RHA1), this protein is Ribonuclease P protein component.